We begin with the raw amino-acid sequence, 445 residues long: Phosphoglucosamine mutase (445 aa).

Residue Ser102 is the Phosphoserine intermediate of the active site. The Mg(2+) site is built by Ser102, Asp241, Asp243, and Asp245. Residue Ser102 is modified to Phosphoserine.

It belongs to the phosphohexose mutase family. Mg(2+) is required as a cofactor. In terms of processing, activated by phosphorylation.

The catalysed reaction is alpha-D-glucosamine 1-phosphate = D-glucosamine 6-phosphate. Catalyzes the conversion of glucosamine-6-phosphate to glucosamine-1-phosphate. This is Phosphoglucosamine mutase from Haemophilus influenzae (strain PittEE).